The following is a 390-amino-acid chain: 3-ketoacyl-CoA thiolase (390 aa).

Residue cysteine 95 is the Acyl-thioester intermediate of the active site. Active-site proton acceptor residues include histidine 346 and cysteine 376.

It belongs to the thiolase-like superfamily. Thiolase family. As to quaternary structure, heterotetramer of two alpha chains (FadB) and two beta chains (FadA).

It is found in the cytoplasm. It catalyses the reaction an acyl-CoA + acetyl-CoA = a 3-oxoacyl-CoA + CoA. It participates in lipid metabolism; fatty acid beta-oxidation. Catalyzes the final step of fatty acid oxidation in which acetyl-CoA is released and the CoA ester of a fatty acid two carbons shorter is formed. The polypeptide is 3-ketoacyl-CoA thiolase (Acinetobacter baylyi (strain ATCC 33305 / BD413 / ADP1)).